The chain runs to 334 residues: GTPase Obg (334 aa).

One can recognise an Obg domain in the interval 1 to 159; that stretch reads MRFVDEVVIK…KEVRLELNLL (159 aa). The region spanning 160–331 is the OBG-type G domain; it reads ADVALLGLPN…LAKKLNEFLQ (172 aa). Residues 166 to 173, 191 to 195, 212 to 215, 282 to 285, and 312 to 314 each bind GTP; these read GLPNAGKS, FTTMY, DIPG, NKID, and SAA. 2 residues coordinate Mg(2+): serine 173 and threonine 193.

It belongs to the TRAFAC class OBG-HflX-like GTPase superfamily. OBG GTPase family. As to quaternary structure, monomer. Mg(2+) is required as a cofactor.

The protein resides in the cytoplasm. Functionally, an essential GTPase which binds GTP, GDP and possibly (p)ppGpp with moderate affinity, with high nucleotide exchange rates and a fairly low GTP hydrolysis rate. Plays a role in control of the cell cycle, stress response, ribosome biogenesis and in those bacteria that undergo differentiation, in morphogenesis control. The chain is GTPase Obg from Francisella tularensis subsp. mediasiatica (strain FSC147).